The chain runs to 720 residues: Fatty acid CoA ligase Acsl3 (720 aa).

The helical; Signal-anchor for type III membrane protein transmembrane segment at 21-41 threads the bilayer; it reads ILLYFIHFIISLYTILTYIPF. The Cytoplasmic segment spans residues 42-720; the sequence is YFLCESKQEK…ADIERMYGRK (679 aa). Position 683 is a phosphoserine (Ser-683).

This sequence belongs to the ATP-dependent AMP-binding enzyme family. The cofactor is Mg(2+).

Its subcellular location is the mitochondrion outer membrane. The protein resides in the peroxisome membrane. It localises to the microsome membrane. It is found in the endoplasmic reticulum membrane. The enzyme catalyses a long-chain fatty acid + ATP + CoA = a long-chain fatty acyl-CoA + AMP + diphosphate. It catalyses the reaction (E)-hexadec-2-enoate + ATP + CoA = (2E)-hexadecenoyl-CoA + AMP + diphosphate. The catalysed reaction is (5Z,8Z,11Z,14Z)-eicosatetraenoate + ATP + CoA = (5Z,8Z,11Z,14Z)-eicosatetraenoyl-CoA + AMP + diphosphate. It carries out the reaction 15-hydroxy-(5Z,8Z,11Z,13E)-eicosatetraenoate + ATP + CoA = 15-hydroxy-(5Z,8Z,11Z,13E)-eicosatetraenoyl-CoA + AMP + diphosphate. The enzyme catalyses 12-hydroxy-(5Z,8Z,10E,14Z)-eicosatetraenoate + ATP + CoA = 12-hydroxy-(5Z,8Z,10E,14Z)-eicosatetraenoyl-CoA + AMP + diphosphate. It catalyses the reaction 5-hydroxy-(6E,8Z,11Z,14Z)-eicosatetraenoate + ATP + CoA = 5-hydroxy-(6E,8Z,11Z,14Z)-eicosatetraenoyl-CoA + AMP + diphosphate. The catalysed reaction is 14,15-epoxy-(5Z,8Z,11Z)-eicosatrienoate + ATP + CoA = 14,15-epoxy-(5Z,8Z,11Z)-eicosatrienoyl-CoA + AMP + diphosphate. It carries out the reaction 11,12-epoxy-(5Z,8Z,14Z)-eicosatrienoate + ATP + CoA = 11,12-epoxy-(5Z,8Z,14Z)-eicosatrienoyl-CoA + AMP + diphosphate. The enzyme catalyses a medium-chain fatty acid + ATP + CoA = a medium-chain fatty acyl-CoA + AMP + diphosphate. It catalyses the reaction hexadecanoate + ATP + CoA = hexadecanoyl-CoA + AMP + diphosphate. The catalysed reaction is tetradecanoate + ATP + CoA = tetradecanoyl-CoA + AMP + diphosphate. It carries out the reaction dodecanoate + ATP + CoA = dodecanoyl-CoA + AMP + diphosphate. The enzyme catalyses octadecanoate + ATP + CoA = octadecanoyl-CoA + AMP + diphosphate. It catalyses the reaction eicosanoate + ATP + CoA = eicosanoyl-CoA + AMP + diphosphate. The catalysed reaction is (9Z)-octadecenoate + ATP + CoA = (9Z)-octadecenoyl-CoA + AMP + diphosphate. It carries out the reaction (9Z)-hexadecenoate + ATP + CoA = (9Z)-hexadecenoyl-CoA + AMP + diphosphate. The enzyme catalyses (9Z,12Z)-octadecadienoate + ATP + CoA = (9Z,12Z)-octadecadienoyl-CoA + AMP + diphosphate. It catalyses the reaction (9Z,12Z,15Z)-octadecatrienoate + ATP + CoA = (9Z,12Z,15Z)-octadecatrienoyl-CoA + AMP + diphosphate. The catalysed reaction is (4Z,7Z,10Z,13Z,16Z,19Z)-docosahexaenoate + ATP + CoA = (4Z,7Z,10Z,13Z,16Z,19Z)-docosahexaenoyl-CoA + AMP + diphosphate. It carries out the reaction (5Z,8Z,11Z,14Z,17Z)-eicosapentaenoate + ATP + CoA = (5Z,8Z,11Z,14Z,17Z)-eicosapentaenoyl-CoA + AMP + diphosphate. The enzyme catalyses a fatty acid + ATP + CoA = a fatty acyl-CoA + AMP + diphosphate. Functionally, acyl-CoA synthetases (ACSL) activates long-chain fatty acids for both synthesis of cellular lipids, and degradation via beta-oxidation. ACSL3 is required for the incorporation of fatty acids into phosphatidylcholine, the major phospholipid located on the surface of VLDL (very low density lipoproteins). Has mainly an anabolic role in energy metabolism. Mediates hepatic lipogenesis. Preferentially uses myristate, laurate, arachidonate and eicosapentaenoate as substrates. Both isoforms exhibit the same level of activity. This chain is Fatty acid CoA ligase Acsl3, found in Mus musculus (Mouse).